The following is a 71-amino-acid chain: Large ribosomal subunit protein bL31 (71 aa).

The Zn(2+) site is built by Cys16, Cys18, Cys37, and Cys40.

It belongs to the bacterial ribosomal protein bL31 family. Type A subfamily. As to quaternary structure, part of the 50S ribosomal subunit. It depends on Zn(2+) as a cofactor.

In terms of biological role, binds the 23S rRNA. This is Large ribosomal subunit protein bL31 from Pseudomonas entomophila (strain L48).